A 238-amino-acid chain; its full sequence is tRNA (guanine-N(7)-)-methyltransferase (238 aa).

Positions 68, 93, 120, and 143 each coordinate S-adenosyl-L-methionine. Asp143 is an active-site residue. Residues Lys147, Asp179, and 216 to 219 (TKFE) contribute to the substrate site.

It belongs to the class I-like SAM-binding methyltransferase superfamily. TrmB family.

It carries out the reaction guanosine(46) in tRNA + S-adenosyl-L-methionine = N(7)-methylguanosine(46) in tRNA + S-adenosyl-L-homocysteine. It participates in tRNA modification; N(7)-methylguanine-tRNA biosynthesis. Catalyzes the formation of N(7)-methylguanine at position 46 (m7G46) in tRNA. The chain is tRNA (guanine-N(7)-)-methyltransferase from Shewanella putrefaciens (strain CN-32 / ATCC BAA-453).